We begin with the raw amino-acid sequence, 600 residues long: Aspartate--tRNA(Asp/Asn) ligase (600 aa).

Glu174 lines the L-aspartate pocket. Residues 198–201 are aspartate; it reads QLFK. Arg220 contributes to the L-aspartate binding site. ATP-binding positions include 220 to 222 and Gln229; that span reads RDE. His457 is a binding site for L-aspartate. Glu491 lines the ATP pocket. An L-aspartate-binding site is contributed by Arg498. Residue 543-546 participates in ATP binding; the sequence is GLDR.

The protein belongs to the class-II aminoacyl-tRNA synthetase family. Type 1 subfamily. Homodimer.

It is found in the cytoplasm. It catalyses the reaction tRNA(Asx) + L-aspartate + ATP = L-aspartyl-tRNA(Asx) + AMP + diphosphate. Aspartyl-tRNA synthetase with relaxed tRNA specificity since it is able to aspartylate not only its cognate tRNA(Asp) but also tRNA(Asn). Reaction proceeds in two steps: L-aspartate is first activated by ATP to form Asp-AMP and then transferred to the acceptor end of tRNA(Asp/Asn). The chain is Aspartate--tRNA(Asp/Asn) ligase from Burkholderia mallei (strain NCTC 10247).